Here is a 148-residue protein sequence, read N- to C-terminus: Methylglyoxal synthase (148 aa).

In terms of domain architecture, MGS-like spans 4–148 (VSVPAIKRIV…LSYNTKVKKD (145 aa)). Residues histidine 17, lysine 21, 43 to 46 (TGTT), and 63 to 64 (SG) contribute to the substrate site. Aspartate 69 functions as the Proton donor/acceptor in the catalytic mechanism. Histidine 96 contacts substrate.

It belongs to the methylglyoxal synthase family.

The catalysed reaction is dihydroxyacetone phosphate = methylglyoxal + phosphate. In terms of biological role, catalyzes the formation of methylglyoxal from dihydroxyacetone phosphate. The protein is Methylglyoxal synthase of Leptospira interrogans serogroup Icterohaemorrhagiae serovar copenhageni (strain Fiocruz L1-130).